The primary structure comprises 294 residues: HTH-type transcriptional regulator TcbR (294 aa).

The HTH lysR-type domain occupies 1-58 (MEFRQLKYFIAVAEAGNMAAAAKRLHVSQPPITRQMQALEADLGVVLLERSHRGIELT). The segment at residues 18-37 (MAAAAKRLHVSQPPITRQMQ) is a DNA-binding region (H-T-H motif).

The protein belongs to the LysR transcriptional regulatory family.

In terms of biological role, involved in regulation of chlorinated catechol metabolism. Transcriptional activator of the tcbCDEF chlorocatechol oxidative operon. May bind 2-chloromuconate as an inducer. This Pseudomonas sp. (strain P51) protein is HTH-type transcriptional regulator TcbR (tcbR).